The chain runs to 310 residues: MQREKAQSRVAVYYELSKPKIWYLLVFTAFGAAVAASGIYGIEISIATWALMLFSVAAGSASANVLTNYHDRDIDAIMKRTQKRPLPSGRVTPAGARNFGLFLAGASMVMAACIALTTTPVQGAWAAAFIAFGLFNNVLVYSYMLKRRSRSNIVLGGLCGGMPPMIGWVAVTTADLWTMGLVMGGLVFIWTPMHIWALTLHFRDDYNKVNVPMLTAVHSEGTSARVIAVSTVAMALFSLAPLLITLEDGAAAVGPVYLATAAASGALIIALSAWVVYKPTEKAAWVLFKFSSPYLAVLFIALMVDAGLRA.

The next 9 helical transmembrane spans lie at 21 to 41, 46 to 66, 99 to 119, 125 to 145, 153 to 173, 180 to 200, 226 to 246, 256 to 276, and 284 to 304; these read IWYL…GIYG, IATW…ANVL, FGLF…LTTT, WAAA…SYML, IVLG…AVTT, GLVM…ALTL, VIAV…LITL, VYLA…AWVV, and AWVL…ALMV.

Belongs to the UbiA prenyltransferase family. Protoheme IX farnesyltransferase subfamily.

It localises to the cell membrane. It catalyses the reaction heme b + (2E,6E)-farnesyl diphosphate + H2O = Fe(II)-heme o + diphosphate. Its pathway is porphyrin-containing compound metabolism; heme O biosynthesis; heme O from protoheme: step 1/1. Its function is as follows. Converts heme B (protoheme IX) to heme O by substitution of the vinyl group on carbon 2 of heme B porphyrin ring with a hydroxyethyl farnesyl side group. This chain is Protoheme IX farnesyltransferase 2, found in Cenarchaeum symbiosum (strain A).